A 185-amino-acid polypeptide reads, in one-letter code: Ribosome-recycling factor (185 aa).

The protein belongs to the RRF family.

The protein resides in the cytoplasm. Its function is as follows. Responsible for the release of ribosomes from messenger RNA at the termination of protein biosynthesis. May increase the efficiency of translation by recycling ribosomes from one round of translation to another. This is Ribosome-recycling factor from Roseiflexus castenholzii (strain DSM 13941 / HLO8).